We begin with the raw amino-acid sequence, 350 residues long: Small ribosomal subunit biogenesis GTPase RsgA (350 aa).

Over residues methionine 1–asparagine 17 the composition is skewed to polar residues. Residues methionine 1–aspartate 33 are disordered. Residues threonine 104–phenylalanine 273 form the CP-type G domain. GTP-binding positions include asparagine 160–aspartate 163 and glycine 214–serine 222. Cysteine 297, cysteine 302, histidine 304, and cysteine 310 together coordinate Zn(2+).

Belongs to the TRAFAC class YlqF/YawG GTPase family. RsgA subfamily. As to quaternary structure, monomer. Associates with 30S ribosomal subunit, binds 16S rRNA. Requires Zn(2+) as cofactor.

The protein localises to the cytoplasm. Its function is as follows. One of several proteins that assist in the late maturation steps of the functional core of the 30S ribosomal subunit. Helps release RbfA from mature subunits. May play a role in the assembly of ribosomal proteins into the subunit. Circularly permuted GTPase that catalyzes slow GTP hydrolysis, GTPase activity is stimulated by the 30S ribosomal subunit. This Shigella flexneri protein is Small ribosomal subunit biogenesis GTPase RsgA.